The chain runs to 251 residues: Probable transcriptional regulatory protein NFA_37020 (251 aa).

It belongs to the TACO1 family.

The protein localises to the cytoplasm. This Nocardia farcinica (strain IFM 10152) protein is Probable transcriptional regulatory protein NFA_37020.